The sequence spans 483 residues: MLTLDTLNTMLAVSEEGMVEEMILALLASPQLVIFFEKFPRLKNAVTADLPRWREALRSRLKDAHVPPELMEEVMCYQQSQLLSTPQFIVQLPQILALLHRLHSPYAAQAKQLTESNSTFTPALHTLFLQRWRLSLVVQATTLNQQLLEEEREQLLSDVQERMTLSGQLEPTLAENDNAAGRLWDMSAGQLKRGDYQLIVKYGEFLAAQPELMQLAEQLGRSREAKSVPKKDAPMETFRTLVREPATVPEQVDGIQQSDDILRLLPPELATLGITELEYEFYRRLVEKQLLTYRLHGEAWREKVTERPVVHQDVDEQPRGPFIVCVDTSGSMGGFNEQCAKAFCLALMRVALADNRRCFIMLFSTDVVRYELSGPEGIEQAIRFLSQRFRGGTDIASCFRAIIERMQGREWFDADAVVISDFIAQRLPDDVVSKVGELQRLHQHRFHAVAMSAHGKPGIMRIFDHIWRFDTGMRSRLLRRWRR.

Belongs to the ViaA family. As to quaternary structure, homodimer. Interacts with RavA.

The protein resides in the cytoplasm. Component of the RavA-ViaA chaperone complex, which may act on the membrane to optimize the function of some of the respiratory chains. ViaA stimulates the ATPase activity of RavA. The chain is Regulatory protein ViaA from Salmonella schwarzengrund (strain CVM19633).